Reading from the N-terminus, the 271-residue chain is Tropinone reductase homolog At2g29360 (271 aa).

22–46 (LVTGGSKGIGEAVVEELATLGARIH) provides a ligand contact to NADP(+). Residue Ser155 participates in substrate binding. Tyr168 serves as the catalytic Proton acceptor.

It belongs to the short-chain dehydrogenases/reductases (SDR) family. SDR65C subfamily.

Its function is as follows. Oxidoreductase active on cyclic ketones, but not on tropinone or nortropinone. This is Tropinone reductase homolog At2g29360 from Arabidopsis thaliana (Mouse-ear cress).